We begin with the raw amino-acid sequence, 310 residues long: Uridine phosphorylase 1 (310 aa).

Phosphate is bound by residues Gly60, Arg94, and 138-141 (RIGT). Residues 142 to 143 (SG) and 217 to 219 (QGR) each bind uridine.

Belongs to the PNP/UDP phosphorylase family. In terms of assembly, homodimer.

It catalyses the reaction uridine + phosphate = alpha-D-ribose 1-phosphate + uracil. The catalysed reaction is 2'-deoxyuridine + phosphate = 2-deoxy-alpha-D-ribose 1-phosphate + uracil. The protein operates within pyrimidine metabolism; UMP biosynthesis via salvage pathway; uracil from uridine (phosphorylase route): step 1/1. In terms of biological role, catalyzes the reversible phosphorylytic cleavage of uridine to uracil and ribose-1-phosphate which can then be utilized as carbon and energy sources or in the rescue of pyrimidine bases for nucleotide synthesis. Shows broad substrate specificity and can also accept deoxyuridine and other analogous compounds. This chain is Uridine phosphorylase 1, found in Homo sapiens (Human).